A 155-amino-acid polypeptide reads, in one-letter code: Endoribonuclease YbeY (155 aa).

Residues His114, His118, and His124 each coordinate Zn(2+).

It belongs to the endoribonuclease YbeY family. Zn(2+) is required as a cofactor.

The protein localises to the cytoplasm. In terms of biological role, single strand-specific metallo-endoribonuclease involved in late-stage 70S ribosome quality control and in maturation of the 3' terminus of the 16S rRNA. This is Endoribonuclease YbeY from Salmonella arizonae (strain ATCC BAA-731 / CDC346-86 / RSK2980).